The following is an 86-amino-acid chain: RNA-binding protein Hfq (86 aa).

The Sm domain occupies 9–68 (DPYLNTLRKEKVPVSIYLVNGIKLQGQIESFDQFVVLLKNTVSQMVYKHAISTVVPARPV). The interval 66 to 86 (RPVRLPSPSDAEHGDSEPGNA) is disordered. Residues 75–86 (DAEHGDSEPGNA) are compositionally biased toward basic and acidic residues.

The protein belongs to the Hfq family. Homohexamer.

Functionally, RNA chaperone that binds small regulatory RNA (sRNAs) and mRNAs to facilitate mRNA translational regulation in response to envelope stress, environmental stress and changes in metabolite concentrations. Also binds with high specificity to tRNAs. The polypeptide is RNA-binding protein Hfq (Pseudomonas entomophila (strain L48)).